A 388-amino-acid chain; its full sequence is Alanine racemase (388 aa).

K39 serves as the catalytic Proton acceptor; specific for D-alanine. K39 is subject to N6-(pyridoxal phosphate)lysine. Position 129 is an N6-carboxylysine (K129). Residue R136 participates in substrate binding. The active-site Proton acceptor; specific for L-alanine is Y265. Residue M312 participates in substrate binding.

Belongs to the alanine racemase family. In terms of assembly, homodimer. It depends on pyridoxal 5'-phosphate as a cofactor.

The catalysed reaction is L-alanine = D-alanine. The protein operates within amino-acid biosynthesis; D-alanine biosynthesis; D-alanine from L-alanine: step 1/1. Its activity is regulated as follows. Inhibited by acetate and propionate. Irreversibly inhibited by cycloserine. Catalyzes the interconversion of L-alanine and D-alanine. Also weakly active on serine. This chain is Alanine racemase (alr), found in Geobacillus stearothermophilus (Bacillus stearothermophilus).